The chain runs to 238 residues: 3,4-dihydroxy-2-butanone 4-phosphate synthase (238 aa).

D-ribulose 5-phosphate is bound by residues 26–27 (RE), D31, 166–170 (RVGQT), and E190. E27 contributes to the Mg(2+) binding site.

It belongs to the DHBP synthase family. Homodimer. It depends on Mg(2+) as a cofactor. The cofactor is Mn(2+).

The catalysed reaction is D-ribulose 5-phosphate = (2S)-2-hydroxy-3-oxobutyl phosphate + formate + H(+). The protein operates within cofactor biosynthesis; riboflavin biosynthesis; 2-hydroxy-3-oxobutyl phosphate from D-ribulose 5-phosphate: step 1/1. Catalyzes the conversion of D-ribulose 5-phosphate to formate and 3,4-dihydroxy-2-butanone 4-phosphate. The chain is 3,4-dihydroxy-2-butanone 4-phosphate synthase from Archaeoglobus fulgidus (strain ATCC 49558 / DSM 4304 / JCM 9628 / NBRC 100126 / VC-16).